A 178-amino-acid chain; its full sequence is Interleukin-10 (178 aa).

The signal sequence occupies residues M1–P18. 2 disulfide bridges follow: C30-C126 and C80-C132. A glycan (N-linked (GlcNAc...) asparagine) is linked at N134.

Belongs to the IL-10 family. Homodimer. Interacts with IL10RA and IL10RB.

It localises to the secreted. Functionally, major immune regulatory cytokine that acts on many cells of the immune system where it has profound anti-inflammatory functions, limiting excessive tissue disruption caused by inflammation. Mechanistically, IL10 binds to its heterotetrameric receptor comprising IL10RA and IL10RB leading to JAK1 and STAT2-mediated phosphorylation of STAT3. In turn, STAT3 translocates to the nucleus where it drives expression of anti-inflammatory mediators. Targets antigen-presenting cells (APCs) such as macrophages and monocytes and inhibits their release of pro-inflammatory cytokines including granulocyte-macrophage colony-stimulating factor /GM-CSF, granulocyte colony-stimulating factor/G-CSF, IL-1 alpha, IL-1 beta, IL-6, IL-8 and TNF-alpha. Also interferes with antigen presentation by reducing the expression of MHC-class II and co-stimulatory molecules, thereby inhibiting their ability to induce T cell activation. In addition, controls the inflammatory response of macrophages by reprogramming essential metabolic pathways including mTOR signaling. The sequence is that of Interleukin-10 (IL10) from Meriones unguiculatus (Mongolian jird).